The primary structure comprises 507 residues: Interleukin-17 receptor E-like protein (507 aa).

Positions 1 to 21 (MLAGQALAFLGLTWGTFQSLA) are cleaved as a signal peptide.

It localises to the secreted. In Homo sapiens (Human), this protein is Interleukin-17 receptor E-like protein.